Here is a 494-residue protein sequence, read N- to C-terminus: MSSEDSLKSLSLDYLSLLINGQAFSDVAFSVEGRLVHAHRCVLAARSLFFRKLFCGLDPNHQPPPPPPPLNWPMAGGGGGGSGGGGRGGAGGGGGAPATPELVIPVSSIRYEVLVLVLQFLYSGQASVAAPKSGPLPGCGARGCWHTRCGAAVDLALDTLAAARSFGVEQLALLVQKQLESMVKEASVDDVMKVLMASRKFEMQELWATCSHLVARSGLSADLLAKHLPIDVVAKIEEIRAKSPLAAVAAPRSPFLTHHYLPMNPASSAADRDNKIRRMRRALDAADIELVKLMVMGEGLDLDDALAVHYAVQHCNRDVVKALLELGAADVNSRAGPTGKTALHLAAEMVSPDMVSVLLDHHADPNSRTLDGVTPLDVLRSLTSEFLFKGAVPGLTHIEPNKLRLCLELVQSAVMVTTRDDGAPVTGGAEAGGSDGGNFPRSDADDSLVSLTMNSTLMYQGQEMAAAVAAGEGRKSNNGRGSPPPAMYFPNGFA.

Positions 25-130 constitute a BTB domain; it reads SDVAFSVEGR…LYSGQASVAA (106 aa). Residues 60 to 94 are disordered; it reads NHQPPPPPPPLNWPMAGGGGGGSGGGGRGGAGGGG. Positions 61–71 are enriched in pro residues; the sequence is HQPPPPPPPLN. Residues 75-94 show a composition bias toward gly residues; the sequence is AGGGGGGSGGGGRGGAGGGG. A C2HC NPR-type zinc finger spans residues 136-150; that stretch reads LPGCGARGCWHTRCG. Zn(2+) is bound by residues cysteine 139, cysteine 144, histidine 146, and cysteine 149. ANK repeat units follow at residues 274–302, 303–333, 338–367, and 371–405; these read NKIR…GLDL, DDAL…DVNS, TGKT…DPNS, and DGVT…KLRL. Disordered stretches follow at residues 421-443 and 469-494; these read DGAP…PRSD and AAGE…NGFA.

It belongs to the plant 'ANKYRIN-BTB/POZ' family. 'NOOT-BOP-COCH-like' (NBCL) subfamily. Homodimer. Interacts with TGAL5, TGAL7, TGAL8 and TGAL9.

Its subcellular location is the nucleus. The protein resides in the cytoplasm. The protein operates within protein modification; protein ubiquitination. Functionally, may act as a substrate-specific adapter of an E3 ubiquitin-protein ligase complex (CUL3-RBX1-BTB) which mediates the ubiquitination and subsequent proteasomal degradation of target proteins. Transcriptional co-regulator involved in the promotion of leaf and floral meristem fate and determinacy. Required for the abscission of senescent organs, probably by regulating the cell wall disorganization in abscission zones (AZs, e.g. pulvini at the base of leaves). The protein is BTB/POZ domain and ankyrin repeat-containing protein NH5.1 of Oryza sativa subsp. japonica (Rice).